Here is a 181-residue protein sequence, read N- to C-terminus: Bifunctional protein PyrR (181 aa).

Residues 100–112 (VVLVDDVIYTGRT) carry the PRPP-binding motif.

The protein belongs to the purine/pyrimidine phosphoribosyltransferase family. PyrR subfamily. In terms of assembly, homodimer and homohexamer; in equilibrium.

It carries out the reaction UMP + diphosphate = 5-phospho-alpha-D-ribose 1-diphosphate + uracil. Its function is as follows. Regulates transcriptional attenuation of the pyrimidine nucleotide (pyr) operon by binding in a uridine-dependent manner to specific sites on pyr mRNA. This disrupts an antiterminator hairpin in the RNA and favors formation of a downstream transcription terminator, leading to a reduced expression of downstream genes. Also displays a weak uracil phosphoribosyltransferase activity which is not physiologically significant. The chain is Bifunctional protein PyrR from Pelotomaculum thermopropionicum (strain DSM 13744 / JCM 10971 / SI).